Reading from the N-terminus, the 236-residue chain is Rab-like protein 3 (236 aa).

Positions Met1 to Asp236 are small GTPase-like. GTP-binding positions include Gly16–Ser21, Lys148–Asp150, and Asp179–Cys180.

Belongs to the small GTPase superfamily. Rab family. As to quaternary structure, homodimer. Interacts with GPR89; the interaction stabilizes GPR89. Interacts with RAP1GDS1.

Its function is as follows. Required for KRAS signaling regulation and modulation of cell proliferation. Regulator of KRAS prenylation, and probably prenylation of other small GTPases. Required for lymphocyte development and function. Not required for myeloid cell development. The protein is Rab-like protein 3 (RABL3) of Bos taurus (Bovine).